The primary structure comprises 624 residues: DNA mismatch repair protein MutL (624 aa).

The disordered stretch occupies residues 355-377; the sequence is EESAPERKLPEKTPEPSYSPMKL. A compositionally biased stretch (basic and acidic residues) spans 358–368; that stretch reads APERKLPEKTP.

This sequence belongs to the DNA mismatch repair MutL/HexB family.

Functionally, this protein is involved in the repair of mismatches in DNA. It is required for dam-dependent methyl-directed DNA mismatch repair. May act as a 'molecular matchmaker', a protein that promotes the formation of a stable complex between two or more DNA-binding proteins in an ATP-dependent manner without itself being part of a final effector complex. The polypeptide is DNA mismatch repair protein MutL (Bacillus velezensis (strain DSM 23117 / BGSC 10A6 / LMG 26770 / FZB42) (Bacillus amyloliquefaciens subsp. plantarum)).